We begin with the raw amino-acid sequence, 152 residues long: Gene 35 protein (152 aa).

Positions 86-120 form a coiled coil; that stretch reads PKKVDILEELTDKVEELEANVSFEVDRIQGYQERY.

Belongs to the herpesviridae UL96 family.

The chain is Gene 35 protein (35) from Connochaetes taurinus (Blue wildebeest).